The sequence spans 181 residues: Mytilin-1 (181 aa).

The first 22 residues, 1–22 (MISKYCLFVIVLGTTGTALVLT), serve as a signal peptide directing secretion.

In terms of tissue distribution, component of the organic matrix of calcified shell layers like nacre and prisms.

Its subcellular location is the secreted. This chain is Mytilin-1, found in Mytilus galloprovincialis (Mediterranean mussel).